The primary structure comprises 554 residues: Phosphoglucomutase (554 aa).

Arg21 is an alpha-D-glucose 1,6-bisphosphate binding site. Thr111 bears the Phosphothreonine mark. Ser113 lines the alpha-D-glucose 1,6-bisphosphate pocket. Ser113 functions as the Phosphoserine intermediate in the catalytic mechanism. Mg(2+)-binding residues include Ser113, Asp278, Asp280, and Asp282. The residue at position 113 (Ser113) is a Phosphoserine. 6 residues coordinate alpha-D-glucose 1,6-bisphosphate: Asp282, Arg283, Thr346, Glu365, Ser367, and Lys378.

It belongs to the phosphohexose mutase family. Monomer. Mg(2+) is required as a cofactor.

The protein localises to the cytoplasm. The protein resides in the nucleus. The catalysed reaction is alpha-D-glucose 1-phosphate = alpha-D-glucose 6-phosphate. The enzyme catalyses O-phospho-L-seryl-[protein] + alpha-D-glucose 1-phosphate = alpha-D-glucose 1,6-bisphosphate + L-seryl-[protein]. It carries out the reaction alpha-D-glucose 1,6-bisphosphate + L-seryl-[protein] = O-phospho-L-seryl-[protein] + alpha-D-glucose 6-phosphate. Catalyzes the reversible isomerization of alpha-D-glucose 1-phosphate to alpha-D-glucose 6-phosphate. The mechanism proceeds via the intermediate compound alpha-D-glucose 1,6-bisphosphate. Key enzyme in hexose metabolism. The reverse reaction is an essential step for biosynthesis because glucose 1-phosphate is the starting point for the synthesis of UDP-glucose, which acts as a precursor for the synthesis of oligosaccharides and trehalose. This is Phosphoglucomutase from Schizosaccharomyces pombe (strain 972 / ATCC 24843) (Fission yeast).